A 180-amino-acid chain; its full sequence is Cytokinin-beta-glucosidase 4 (180 aa).

Functionally, hydrolyzes cytokinin glucosides thus liberating free cytokinins. The protein is Cytokinin-beta-glucosidase 4 (ROLC4) of Panax ginseng (Korean ginseng).